The sequence spans 101 residues: Urease subunit beta (101 aa).

Belongs to the urease beta subunit family. In terms of assembly, heterotrimer of UreA (gamma), UreB (beta) and UreC (alpha) subunits. Three heterotrimers associate to form the active enzyme.

The protein resides in the cytoplasm. The catalysed reaction is urea + 2 H2O + H(+) = hydrogencarbonate + 2 NH4(+). The protein operates within nitrogen metabolism; urea degradation; CO(2) and NH(3) from urea (urease route): step 1/1. In Azoarcus sp. (strain BH72), this protein is Urease subunit beta.